The following is a 221-amino-acid chain: NADH-ubiquinone oxidoreductase chain 4 (221 aa).

6 helical membrane passes run 5-25 (YTYIIYVIGVITILYASFSTL), 34-54 (IAYSSVSHAAVYLIGAFSNTI), 61-81 (IALGLAHGFVSSGLFICAGGI), 100-120 (IMPIFSVLFFILALGNSGTPL), 140-160 (ILGVLASTSIVFSAAYTIFMY), and 185-205 (FIMLLVFVILTVLFGIYPAPI).

This sequence belongs to the complex I subunit 4 family.

It is found in the mitochondrion membrane. It carries out the reaction a ubiquinone + NADH + 5 H(+)(in) = a ubiquinol + NAD(+) + 4 H(+)(out). Its function is as follows. Core subunit of the mitochondrial membrane respiratory chain NADH dehydrogenase (Complex I) that is believed to belong to the minimal assembly required for catalysis. Complex I functions in the transfer of electrons from NADH to the respiratory chain. The immediate electron acceptor for the enzyme is believed to be ubiquinone. The protein is NADH-ubiquinone oxidoreductase chain 4 (nd4) of Emericella nidulans (Aspergillus nidulans).